A 107-amino-acid polypeptide reads, in one-letter code: Integration host factor subunit alpha (107 aa).

Belongs to the bacterial histone-like protein family. Heterodimer of an alpha and a beta chain.

In terms of biological role, this protein is one of the two subunits of integration host factor, a specific DNA-binding protein that functions in genetic recombination as well as in transcriptional and translational control. The protein is Integration host factor subunit alpha of Brucella suis (strain ATCC 23445 / NCTC 10510).